Consider the following 358-residue polypeptide: Cytochrome c peroxidase, mitochondrial (358 aa).

A mitochondrion-targeting transit peptide spans 1-38; sequence MAASRTATRTLRALRTSTRPALTAAPRAAFRQGGRRLY. The active-site Proton acceptor is the histidine 119. Residues 192–214 form a disordered region; that stretch reads PYRPGRQDRDAAGCTPDGRLPDA. Histidine 242 is a binding site for heme b. Residue tryptophan 258 is the Tryptophan radical intermediate of the active site.

It belongs to the peroxidase family. Cytochrome c peroxidase subfamily. Forms a one-to-one complex with cytochrome c. Heme b is required as a cofactor.

It is found in the mitochondrion matrix. Its subcellular location is the mitochondrion intermembrane space. It carries out the reaction 2 Fe(II)-[cytochrome c] + H2O2 + 2 H(+) = 2 Fe(III)-[cytochrome c] + 2 H2O. Destroys radicals which are normally produced within the cells and which are toxic to biological systems. This chain is Cytochrome c peroxidase, mitochondrial (ccp-1), found in Neurospora crassa (strain ATCC 24698 / 74-OR23-1A / CBS 708.71 / DSM 1257 / FGSC 987).